Consider the following 271-residue polypeptide: Auxin-responsive protein IAA5 (271 aa).

The segment at Met1–Ala96 is disordered. 2 stretches are compositionally biased toward low complexity: residues Ser14–Pro33 and Pro40–Gly50. Residues Leu44 to Leu48 carry the EAR-like (transcriptional repression) motif. Positions Pro151–Asp255 constitute a PB1 domain.

The protein belongs to the Aux/IAA family. Homodimers and heterodimers.

Its subcellular location is the nucleus. Functionally, aux/IAA proteins are short-lived transcriptional factors that function as repressors of early auxin response genes at low auxin concentrations. In Oryza sativa subsp. japonica (Rice), this protein is Auxin-responsive protein IAA5 (IAA5).